An 831-amino-acid chain; its full sequence is Leucine--tRNA ligase (831 aa).

The 'HIGH' region signature appears at 36–46; the sequence is PYPSGKLHIGH. The short motif at 607-611 is the 'KMSKS' region element; the sequence is KMSKS. Lysine 610 contributes to the ATP binding site.

It belongs to the class-I aminoacyl-tRNA synthetase family.

The protein resides in the cytoplasm. The catalysed reaction is tRNA(Leu) + L-leucine + ATP = L-leucyl-tRNA(Leu) + AMP + diphosphate. In Neorickettsia sennetsu (strain ATCC VR-367 / Miyayama) (Ehrlichia sennetsu), this protein is Leucine--tRNA ligase.